The primary structure comprises 83 residues: Cell division topological specificity factor (83 aa).

Belongs to the MinE family.

In terms of biological role, prevents the cell division inhibition by proteins MinC and MinD at internal division sites while permitting inhibition at polar sites. This ensures cell division at the proper site by restricting the formation of a division septum at the midpoint of the long axis of the cell. This chain is Cell division topological specificity factor, found in Deinococcus deserti (strain DSM 17065 / CIP 109153 / LMG 22923 / VCD115).